A 470-amino-acid polypeptide reads, in one-letter code: Asparagine--tRNA ligase (470 aa).

The protein belongs to the class-II aminoacyl-tRNA synthetase family. In terms of assembly, homodimer.

The protein resides in the cytoplasm. It catalyses the reaction tRNA(Asn) + L-asparagine + ATP = L-asparaginyl-tRNA(Asn) + AMP + diphosphate + H(+). The chain is Asparagine--tRNA ligase from Blochmanniella floridana.